We begin with the raw amino-acid sequence, 217 residues long: Oxygen-evolving enhancer protein 3-1, chloroplastic (217 aa).

Residues 1–68 (MAQAMASMTG…GGALSQAARA (68 aa)) constitute a chloroplast transit peptide.

It belongs to the PsbQ family.

Its subcellular location is the plastid. It is found in the chloroplast thylakoid membrane. This is Oxygen-evolving enhancer protein 3-1, chloroplastic (PSBQ1) from Zea mays (Maize).